We begin with the raw amino-acid sequence, 356 residues long: Ferrochelatase (356 aa).

Fe cation contacts are provided by His-214 and Glu-295.

This sequence belongs to the ferrochelatase family.

The protein resides in the cytoplasm. The enzyme catalyses heme b + 2 H(+) = protoporphyrin IX + Fe(2+). The protein operates within porphyrin-containing compound metabolism; protoheme biosynthesis; protoheme from protoporphyrin-IX: step 1/1. In terms of biological role, catalyzes the ferrous insertion into protoporphyrin IX. The protein is Ferrochelatase of Paraburkholderia phytofirmans (strain DSM 17436 / LMG 22146 / PsJN) (Burkholderia phytofirmans).